The sequence spans 206 residues: Protease (206 aa).

Residues H55, D72, and C122 contribute to the active site.

This sequence belongs to the peptidase C5 family. Interacts with protease cofactor pVI-C; this interaction is necessary for protease activation.

The protein localises to the virion. It is found in the host nucleus. It catalyses the reaction Cleaves proteins of the adenovirus and its host cell at two consensus sites: -Yaa-Xaa-Gly-Gly-|-Xaa- and -Yaa-Xaa-Gly-Xaa-|-Gly- (in which Yaa is Met, Ile or Leu, and Xaa is any amino acid).. With respect to regulation, requires DNA and protease cofactor for maximal activation. Inside nascent virions, becomes partially activated by binding to the viral DNA, allowing it to cleave the cofactor that binds to the protease and fully activates it. Actin, like the viral protease cofactor, seems to act as a cofactor in the cleavage of cytokeratin 18 and of actin itself. Cleaves viral precursor proteins (pTP, pIIIa, pVI, pVII, pVIII, and pX) inside newly assembled particles giving rise to mature virions. Protease complexed to its cofactor slides along the viral DNA to specifically locate and cleave the viral precursors. Mature virions have a weakened organization compared to the unmature virions, thereby facilitating subsequent uncoating. Without maturation, the particle lacks infectivity and is unable to uncoat. Late in adenovirus infection, in the cytoplasm, may participate in the cytoskeleton destruction. Cleaves host cell cytoskeletal keratins K7 and K18. This is Protease from Fowl adenovirus A serotype 1 (strain CELO / Phelps) (FAdV-1).